Consider the following 549-residue polypeptide: Putative acyl-CoA synthetase YngI (549 aa).

Residues 198–206, D423, R438, and K529 contribute to the ATP site; that span reads TSGTTGFPK.

It belongs to the ATP-dependent AMP-binding enzyme family.

This chain is Putative acyl-CoA synthetase YngI (yngI), found in Bacillus subtilis (strain 168).